A 155-amino-acid polypeptide reads, in one-letter code: MRLRLIAVGSRMPRWVEEGWQEYVKRLPAELSLELVEIPLNTRGKNADVARLIRQEGEAMLARVQPGERVVTLEVEGRLWSTEQLARELDRWRLDARTVNLMVGGPEGLAPEVCARSEQRWSLSPLTLPHPLVRILVGEQIYRAWTVLSGHPYHK.

S-adenosyl-L-methionine contacts are provided by residues Leu73, Gly104, and 123–128 (LSPLTL).

The protein belongs to the RNA methyltransferase RlmH family. In terms of assembly, homodimer.

Its subcellular location is the cytoplasm. It carries out the reaction pseudouridine(1915) in 23S rRNA + S-adenosyl-L-methionine = N(3)-methylpseudouridine(1915) in 23S rRNA + S-adenosyl-L-homocysteine + H(+). Its function is as follows. Specifically methylates the pseudouridine at position 1915 (m3Psi1915) in 23S rRNA. In Pseudomonas aeruginosa (strain UCBPP-PA14), this protein is Ribosomal RNA large subunit methyltransferase H.